A 350-amino-acid chain; its full sequence is Pleckstrin (350 aa).

The region spanning lysine 4 to lysine 101 is the PH 1 domain. Position 64 is an N6-acetyllysine (lysine 64). Phosphoserine; by PKC occurs at positions 113 and 117. Residues threonine 136–aspartate 221 form the DEP domain. The PH 2 domain maps to valine 244–arginine 347.

In terms of biological role, major protein kinase C substrate of platelets. The sequence is that of Pleckstrin (PLEK) from Homo sapiens (Human).